The primary structure comprises 432 residues: Transcriptional adapter 3-A (432 aa).

Disordered regions lie at residues 90–127 (HELG…RNMQ) and 275–314 (SPVE…TKSL). Over residues 293 to 305 (DGASTSPRSQNKP) the composition is skewed to polar residues. The stretch at 335 to 398 (ADDSEDEVLA…NEVMDAFRKI (64 aa)) forms a coiled coil.

The protein belongs to the NGG1 family.

Its subcellular location is the nucleus. In terms of biological role, functions as a component of the PCAF complex. The PCAF complex is capable of efficiently acetylating histones in a nucleosomal context. The polypeptide is Transcriptional adapter 3-A (tada3-a) (Xenopus laevis (African clawed frog)).